We begin with the raw amino-acid sequence, 241 residues long: Probable septum site-determining protein MinC (241 aa).

This sequence belongs to the MinC family. Interacts with MinD and FtsZ.

In terms of biological role, cell division inhibitor that blocks the formation of polar Z ring septums. Rapidly oscillates between the poles of the cell to destabilize FtsZ filaments that have formed before they mature into polar Z rings. Prevents FtsZ polymerization. This Rhizobium rhizogenes (strain K84 / ATCC BAA-868) (Agrobacterium radiobacter) protein is Probable septum site-determining protein MinC.